Reading from the N-terminus, the 396-residue chain is Phosphopentomutase (396 aa).

Residues Asp-13, Asp-288, His-293, Asp-329, His-330, and His-341 each contribute to the Mn(2+) site.

This sequence belongs to the phosphopentomutase family. Mn(2+) serves as cofactor.

Its subcellular location is the cytoplasm. It carries out the reaction 2-deoxy-alpha-D-ribose 1-phosphate = 2-deoxy-D-ribose 5-phosphate. It catalyses the reaction alpha-D-ribose 1-phosphate = D-ribose 5-phosphate. It functions in the pathway carbohydrate degradation; 2-deoxy-D-ribose 1-phosphate degradation; D-glyceraldehyde 3-phosphate and acetaldehyde from 2-deoxy-alpha-D-ribose 1-phosphate: step 1/2. Functionally, isomerase that catalyzes the conversion of deoxy-ribose 1-phosphate (dRib-1-P) and ribose 1-phosphate (Rib-1-P) to deoxy-ribose 5-phosphate (dRib-5-P) and ribose 5-phosphate (Rib-5-P), respectively. The chain is Phosphopentomutase from Clostridium perfringens (strain ATCC 13124 / DSM 756 / JCM 1290 / NCIMB 6125 / NCTC 8237 / Type A).